A 76-amino-acid chain; its full sequence is Cytochrome c oxidase subunit 6C-2 (76 aa).

Topologically, residues 4-14 (GALLPKPQMRG) are mitochondrial matrix. A helical transmembrane segment spans residues 15 to 55 (LLAKRLRVHIVGAFVVALGVAAAYKFGVAEPRKKAYADFYR). Over 56–76 (NYDSMKDFEEMRQAGVFQSAK) the chain is Mitochondrial intermembrane. Ser74 carries the phosphoserine modification.

The protein belongs to the cytochrome c oxidase subunit 6c family. Component of the cytochrome c oxidase (complex IV, CIV), a multisubunit enzyme composed of 14 subunits. The complex is composed of a catalytic core of 3 subunits MT-CO1, MT-CO2 and MT-CO3, encoded in the mitochondrial DNA, and 11 supernumerary subunits COX4I, COX5A, COX5B, COX6A, COX6B, COX6C, COX7A, COX7B, COX7C, COX8 and NDUFA4, which are encoded in the nuclear genome. The complex exists as a monomer or a dimer and forms supercomplexes (SCs) in the inner mitochondrial membrane with NADH-ubiquinone oxidoreductase (complex I, CI) and ubiquinol-cytochrome c oxidoreductase (cytochrome b-c1 complex, complex III, CIII), resulting in different assemblies (supercomplex SCI(1)III(2)IV(1) and megacomplex MCI(2)III(2)IV(2)).

The protein localises to the mitochondrion inner membrane. It participates in energy metabolism; oxidative phosphorylation. Its function is as follows. Component of the cytochrome c oxidase, the last enzyme in the mitochondrial electron transport chain which drives oxidative phosphorylation. The respiratory chain contains 3 multisubunit complexes succinate dehydrogenase (complex II, CII), ubiquinol-cytochrome c oxidoreductase (cytochrome b-c1 complex, complex III, CIII) and cytochrome c oxidase (complex IV, CIV), that cooperate to transfer electrons derived from NADH and succinate to molecular oxygen, creating an electrochemical gradient over the inner membrane that drives transmembrane transport and the ATP synthase. Cytochrome c oxidase is the component of the respiratory chain that catalyzes the reduction of oxygen to water. Electrons originating from reduced cytochrome c in the intermembrane space (IMS) are transferred via the dinuclear copper A center (CU(A)) of subunit 2 and heme A of subunit 1 to the active site in subunit 1, a binuclear center (BNC) formed by heme A3 and copper B (CU(B)). The BNC reduces molecular oxygen to 2 water molecules using 4 electrons from cytochrome c in the IMS and 4 protons from the mitochondrial matrix. The polypeptide is Cytochrome c oxidase subunit 6C-2 (Cox6c2) (Rattus norvegicus (Rat)).